The chain runs to 296 residues: 4-hydroxybenzoate octaprenyltransferase (296 aa).

Transmembrane regions (helical) follow at residues 29–49, 55–75, 102–122, 146–166, 169–189, 219–239, 241–261, and 275–295; these read IGIY…ADGV, LLIF…INDF, AWIT…LTNA, YYPQ…AFTA, GELP…TVAY, LIIG…GNRF, LGLC…WEAW, and FLHN…DYAL.

Belongs to the UbiA prenyltransferase family. Mg(2+) is required as a cofactor.

The protein resides in the cell inner membrane. The enzyme catalyses all-trans-octaprenyl diphosphate + 4-hydroxybenzoate = 4-hydroxy-3-(all-trans-octaprenyl)benzoate + diphosphate. It functions in the pathway cofactor biosynthesis; ubiquinone biosynthesis. In terms of biological role, catalyzes the prenylation of para-hydroxybenzoate (PHB) with an all-trans polyprenyl group. Mediates the second step in the final reaction sequence of ubiquinone-8 (UQ-8) biosynthesis, which is the condensation of the polyisoprenoid side chain with PHB, generating the first membrane-bound Q intermediate 3-octaprenyl-4-hydroxybenzoate. The chain is 4-hydroxybenzoate octaprenyltransferase from Pseudomonas aeruginosa (strain LESB58).